The primary structure comprises 257 residues: RLA class II histocompatibility antigen, DP beta chain (257 aa).

A signal peptide spans 1-29 (MRPCRSLRTAALAVVLTVLLHPVALGRAT). The beta-1 stretch occupies residues 30 to 120 (PGESEQNYLW…LFQGLPVLLQ (91 aa)). Topologically, residues 30 to 224 (PGESEQNYLW…KAQSDSARSK (195 aa)) are extracellular. Intrachain disulfides connect Cys45/Cys105 and Cys143/Cys199. Asn49 is a glycosylation site (N-linked (GlcNAc...) asparagine). The tract at residues 121-214 (TQPRVSVSPS…SLDSPITVEW (94 aa)) is beta-2. An Ig-like C1-type domain is found at 123 to 211 (PRVSVSPSKK…EHPSLDSPIT (89 aa)). The segment at 215 to 224 (KAQSDSARSK) is connecting peptide. The chain crosses the membrane as a helical span at residues 225-245 (MLAGVGGLVLGLVSLAVGVFM). The Cytoplasmic segment spans residues 246-257 (HRRSKKAQQGCR).

It belongs to the MHC class II family.

The protein resides in the membrane. The protein is RLA class II histocompatibility antigen, DP beta chain of Oryctolagus cuniculus (Rabbit).